Reading from the N-terminus, the 393-residue chain is Arginine biosynthesis bifunctional protein ArgJ (393 aa).

Substrate-binding residues include T143, K168, T179, E265, N388, and T393. T179 serves as the catalytic Nucleophile.

The protein belongs to the ArgJ family. Heterotetramer of two alpha and two beta chains.

It localises to the cytoplasm. The enzyme catalyses N(2)-acetyl-L-ornithine + L-glutamate = N-acetyl-L-glutamate + L-ornithine. It catalyses the reaction L-glutamate + acetyl-CoA = N-acetyl-L-glutamate + CoA + H(+). It participates in amino-acid biosynthesis; L-arginine biosynthesis; L-ornithine and N-acetyl-L-glutamate from L-glutamate and N(2)-acetyl-L-ornithine (cyclic): step 1/1. The protein operates within amino-acid biosynthesis; L-arginine biosynthesis; N(2)-acetyl-L-ornithine from L-glutamate: step 1/4. Functionally, catalyzes two activities which are involved in the cyclic version of arginine biosynthesis: the synthesis of N-acetylglutamate from glutamate and acetyl-CoA as the acetyl donor, and of ornithine by transacetylation between N(2)-acetylornithine and glutamate. The protein is Arginine biosynthesis bifunctional protein ArgJ of Syntrophotalea carbinolica (strain DSM 2380 / NBRC 103641 / GraBd1) (Pelobacter carbinolicus).